Reading from the N-terminus, the 589-residue chain is Sphingosine-1-phosphate lyase (589 aa).

At 1-58 the chain is on the lumenal side; it reads MSGVSNKTVSINGWYGMPIHLLREEGDFAQFMILTINELKIAIHGYLRNTPWYNMLKD. The N-linked (GlcNAc...) asparagine glycan is linked to N6. The chain crosses the membrane as a helical span at residues 59–76; that stretch reads YLFVIFCYKLISNFFYLL. The Cytoplasmic portion of the chain corresponds to 77–589; the sequence is KVYGPVRLAV…LGPGEDTATK (513 aa). K380 bears the N6-(pyridoxal phosphate)lysine mark.

The protein belongs to the group II decarboxylase family. Sphingosine-1-phosphate lyase subfamily. Homodimer. The cofactor is pyridoxal 5'-phosphate. Post-translationally, glycosylated.

It is found in the endoplasmic reticulum membrane. The catalysed reaction is sphinganine 1-phosphate = hexadecanal + phosphoethanolamine. The enzyme catalyses (4R)-hydroxysphinganine 1-phosphate = (2R)-hydroxyhexadecanal + phosphoethanolamine. The protein operates within lipid metabolism; sphingolipid metabolism. Its function is as follows. Sphingosine-1-phosphate lyase that cleaves phosphorylated sphingoid bases (PSBs), such as sphingosine-1-phosphate, into fatty aldehydes and phosphoethanolamine. Prefers C-16 dihydrosphingosine-l-phosphate (DHS-P) as a substrate. Regulates intracellular levels of sphingolipid long-chain base phosphates (LCBPs). Plays a role in the regulation of global responses to nutrient deprivation in yeast. This is Sphingosine-1-phosphate lyase from Saccharomyces cerevisiae (strain ATCC 204508 / S288c) (Baker's yeast).